Here is a 207-residue protein sequence, read N- to C-terminus: MNLKEELKAGLAELGLALSAPQELLLVHYVELLDKWNRVYNLTAVRETGRMLSYHVLDSLAALPLVAGQRILDVGSGGGMPGIPFAISQPDWSLTLLDANHKKTTFLKQAVIELGLTNTEVVCERVEAFQPERKFDVITSRAFSDLAEFVRLTRHLLAEGGEWAALKGVYPDEEIAQLPEDVCVREVIELKVPGLDAERHLVKLGLR.

S-adenosyl-L-methionine-binding positions include Gly-75, Met-80, 126–127, and Arg-141; that span reads VE.

The protein belongs to the methyltransferase superfamily. RNA methyltransferase RsmG family.

Its subcellular location is the cytoplasm. The catalysed reaction is guanosine(527) in 16S rRNA + S-adenosyl-L-methionine = N(7)-methylguanosine(527) in 16S rRNA + S-adenosyl-L-homocysteine. Its function is as follows. Specifically methylates the N7 position of guanine in position 527 of 16S rRNA. This Laribacter hongkongensis (strain HLHK9) protein is Ribosomal RNA small subunit methyltransferase G.